The primary structure comprises 417 residues: Gamma-glutamyl phosphate reductase (417 aa).

The protein belongs to the gamma-glutamyl phosphate reductase family.

It is found in the cytoplasm. The catalysed reaction is L-glutamate 5-semialdehyde + phosphate + NADP(+) = L-glutamyl 5-phosphate + NADPH + H(+). The protein operates within amino-acid biosynthesis; L-proline biosynthesis; L-glutamate 5-semialdehyde from L-glutamate: step 2/2. Catalyzes the NADPH-dependent reduction of L-glutamate 5-phosphate into L-glutamate 5-semialdehyde and phosphate. The product spontaneously undergoes cyclization to form 1-pyrroline-5-carboxylate. The polypeptide is Gamma-glutamyl phosphate reductase (Enterobacter sp. (strain 638)).